A 320-amino-acid polypeptide reads, in one-letter code: Phospho-N-acetylmuramoyl-pentapeptide-transferase (320 aa).

The next 9 helical transmembrane spans lie at 5–25 (LWALARAFIITVVFMPFLIKF), 51–71 (MGGLLFVLAAAISAFIGGAAY), 76–96 (GVVAMIIPVFALVAYAIIGGI), 124–144 (VVIMLIMWLLGVPFTLYIPMI), 145–165 (GTINLGLFYFVFLWFWLVGWS), 176–196 (GLLAGNSVVVYAAYTVIAMHM), 198–218 (NHIIVLFNFSIIGGLLGFLIF), 233–255 (LALGAGLAIESILLGVPFSLIWF), and 298–318 (WQIDLLFWIVSSILAVAGIFY).

The protein belongs to the glycosyltransferase 4 family. MraY subfamily. Requires Mg(2+) as cofactor.

Its subcellular location is the cell membrane. It carries out the reaction UDP-N-acetyl-alpha-D-muramoyl-L-alanyl-gamma-D-glutamyl-L-lysyl-D-alanyl-D-alanine + di-trans,octa-cis-undecaprenyl phosphate = Mur2Ac(oyl-L-Ala-gamma-D-Glu-L-Lys-D-Ala-D-Ala)-di-trans,octa-cis-undecaprenyl diphosphate + UMP. The protein operates within cell wall biogenesis; peptidoglycan biosynthesis. In terms of biological role, catalyzes the initial step of the lipid cycle reactions in the biosynthesis of the cell wall peptidoglycan: transfers peptidoglycan precursor phospho-MurNAc-pentapeptide from UDP-MurNAc-pentapeptide onto the lipid carrier undecaprenyl phosphate, yielding undecaprenyl-pyrophosphoryl-MurNAc-pentapeptide, known as lipid I. In Leuconostoc citreum (strain KM20), this protein is Phospho-N-acetylmuramoyl-pentapeptide-transferase.